Here is a 162-residue protein sequence, read N- to C-terminus: EF-hand calcium-binding domain-containing protein 11 (162 aa).

EF-hand domains lie at 18 to 53, 91 to 126, and 127 to 162; these read SERR…LFGY, LYRN…VAPK, and LPSR…GKAK. Ca(2+) contacts are provided by aspartate 140, aspartate 142, aspartate 144, histidine 146, and aspartate 151.

This Rattus norvegicus (Rat) protein is EF-hand calcium-binding domain-containing protein 11 (Efcab11).